The primary structure comprises 380 residues: Putative F-box/kelch-repeat protein At2g44030 (380 aa).

Positions 16–66 constitute an F-box domain; it reads PKSFLSLPYDVVFNCLSRVSRTHDPILSLVSKSFRSLLALPDLEAERFRIL. 2 Kelch repeats span residues 123–170 and 172–219; these read EIYL…VIDG and INVY…ALIK.

The chain is Putative F-box/kelch-repeat protein At2g44030 from Arabidopsis thaliana (Mouse-ear cress).